A 396-amino-acid chain; its full sequence is 1-deoxy-D-xylulose 5-phosphate reductoisomerase (396 aa).

6 residues coordinate NADPH: threonine 17, glycine 18, serine 19, isoleucine 20, asparagine 47, and asparagine 130. Position 131 (lysine 131) interacts with 1-deoxy-D-xylulose 5-phosphate. Glutamate 132 is a binding site for NADPH. Position 156 (aspartate 156) interacts with Mn(2+). 1-deoxy-D-xylulose 5-phosphate-binding residues include serine 157, glutamate 158, serine 182, and histidine 205. A Mn(2+)-binding site is contributed by glutamate 158. Glycine 211 provides a ligand contact to NADPH. 4 residues coordinate 1-deoxy-D-xylulose 5-phosphate: serine 218, asparagine 223, lysine 224, and glutamate 227. Glutamate 227 provides a ligand contact to Mn(2+).

The protein belongs to the DXR family. The cofactor is Mg(2+). Mn(2+) is required as a cofactor.

It carries out the reaction 2-C-methyl-D-erythritol 4-phosphate + NADP(+) = 1-deoxy-D-xylulose 5-phosphate + NADPH + H(+). It functions in the pathway isoprenoid biosynthesis; isopentenyl diphosphate biosynthesis via DXP pathway; isopentenyl diphosphate from 1-deoxy-D-xylulose 5-phosphate: step 1/6. Catalyzes the NADPH-dependent rearrangement and reduction of 1-deoxy-D-xylulose-5-phosphate (DXP) to 2-C-methyl-D-erythritol 4-phosphate (MEP). The sequence is that of 1-deoxy-D-xylulose 5-phosphate reductoisomerase from Rhizobium etli (strain CIAT 652).